The chain runs to 88 residues: Kunitz-type U15-theraphotoxin-Hhn1a (88 aa).

The first 27 residues, 1-27 (MGTARFLRAVLLLSVLLMVTFPALLSA), serve as a signal peptide directing secretion. The propeptide occupies 28–33 (EHHDGR). The BPTI/Kunitz inhibitor domain maps to 37-85 (CRLPSDSGDCLRFFEMWYFDGTTCTKFVYGGYGGNDNRFPTEKACMKRC). Disulfide bonds link Cys-37-Cys-85 and Cys-60-Cys-81.

Belongs to the venom Kunitz-type family. 03 (sub-Kunitz) subfamily. In terms of tissue distribution, expressed by the venom gland.

Its subcellular location is the secreted. Serine protease inhibitor that inhibits trypsin at a molar ratio of 1:1. In Cyriopagopus hainanus (Chinese bird spider), this protein is Kunitz-type U15-theraphotoxin-Hhn1a.